A 386-amino-acid chain; its full sequence is Manganese dependent endoglucanase Eg5A (386 aa).

An N-terminal signal peptide occupies residues 1–17 (MLKYASIALALATLGVA). Residues 18–53 (QQQQWGQCGGIGWTGATTCVAGSVCSVLNPYYSQCI) form the CBM1 domain. Residue Glu209 is the Proton donor of the active site. The Nucleophile role is filled by Glu319. N-linked (GlcNAc...) asparagine glycosylation is present at Asn324.

This sequence belongs to the glycosyl hydrolase 5 (cellulase A) family. Mn(2+) serves as cofactor.

It is found in the secreted. It catalyses the reaction Endohydrolysis of (1-&gt;4)-beta-D-glucosidic linkages in cellulose, lichenin and cereal beta-D-glucans.. Functionally, secreted manganese dependent endoglucanase that acts by cleaving the beta-1,4-glucose linkage. Exhibits high activity toward carboxymethyl-cellulose (CMC), barley glucan, and glucomannan. Displays low activity on larminarin and xyloglucan but does not hydrolyze hemicellulose substrates such as birchwood xylan, arabinoxylan, and arabinan. This Phanerodontia chrysosporium (White-rot fungus) protein is Manganese dependent endoglucanase Eg5A.